We begin with the raw amino-acid sequence, 625 residues long: Probable receptor-like protein kinase At1g11050 (625 aa).

The N-terminal stretch at 1–20 (MPNSILFLLLSFLYLTNCVA) is a signal peptide. Residues 21–227 (QSPSQTCPLD…PLNSKKKRHT (207 aa)) are Extracellular-facing. N-linked (GlcNAc...) asparagine glycosylation is found at N40, N106, N121, and N177. The chain crosses the membrane as a helical span at residues 228-248 (VALALGITGAIFGALVIAGLI). The Cytoplasmic segment spans residues 249-625 (CLYFRFGKAV…LQIHSGDMLR (377 aa)). In terms of domain architecture, Protein kinase spans 295–555 (FSQKNFIGRG…NPKGIMERFL (261 aa)). ATP is bound by residues 301 to 309 (IGRGGFGFV) and K323. D426 functions as the Proton acceptor in the catalytic mechanism.

This sequence belongs to the protein kinase superfamily. Ser/Thr protein kinase family.

The protein localises to the membrane. The catalysed reaction is L-seryl-[protein] + ATP = O-phospho-L-seryl-[protein] + ADP + H(+). It carries out the reaction L-threonyl-[protein] + ATP = O-phospho-L-threonyl-[protein] + ADP + H(+). This chain is Probable receptor-like protein kinase At1g11050, found in Arabidopsis thaliana (Mouse-ear cress).